The chain runs to 282 residues: HTH-type transcriptional activator RhaR (282 aa).

Positions 179-277 (DKLITALANS…GMTPSQWRHL (99 aa)) constitute an HTH araC/xylS-type domain. 2 DNA-binding regions (H-T-H motif) span residues 196-217 (DAFC…RAQT) and 244-267 (VSEI…TRET).

As to quaternary structure, binds DNA as a dimer.

Its subcellular location is the cytoplasm. Functionally, activates expression of the rhaSR operon in response to L-rhamnose. This is HTH-type transcriptional activator RhaR from Salmonella choleraesuis (strain SC-B67).